We begin with the raw amino-acid sequence, 44 residues long: Alpha-amylase inhibitor WDAI-3 (44 aa).

A disulfide bond links cysteine 20 and cysteine 41.

This sequence belongs to the protease inhibitor I6 (cereal trypsin/alpha-amylase inhibitor) family. Homodimer. The disulfide bonds are essential for the inhibitor activity. Endosperm.

The protein resides in the secreted. Its function is as follows. Alpha-amylase inhibitor. The polypeptide is Alpha-amylase inhibitor WDAI-3 (IHA-B1-2) (Triticum aestivum (Wheat)).